The chain runs to 154 residues: NADPH-dependent 7-cyano-7-deazaguanine reductase (154 aa).

The segment covering 1 to 21 (MPNTDVSSLSMLGHQTETASS) has biased composition (polar residues). Residues 1-26 (MPNTDVSSLSMLGHQTETASSPEEAV) are disordered. Residue Cys-52 is the Thioimide intermediate of the active site. The active-site Proton donor is Asp-59. Substrate-binding positions include 74 to 76 (VES) and 93 to 94 (HE).

The protein belongs to the GTP cyclohydrolase I family. QueF type 1 subfamily.

The protein localises to the cytoplasm. The catalysed reaction is 7-aminomethyl-7-carbaguanine + 2 NADP(+) = 7-cyano-7-deazaguanine + 2 NADPH + 3 H(+). The protein operates within tRNA modification; tRNA-queuosine biosynthesis. In terms of biological role, catalyzes the NADPH-dependent reduction of 7-cyano-7-deazaguanine (preQ0) to 7-aminomethyl-7-deazaguanine (preQ1). The sequence is that of NADPH-dependent 7-cyano-7-deazaguanine reductase from Rhizobium etli (strain ATCC 51251 / DSM 11541 / JCM 21823 / NBRC 15573 / CFN 42).